The following is a 202-amino-acid chain: MIGYLEGRVVARRDRFAIVLTPGGVGYELELPTPVAAALPAPGGQVSLFVHTVVREDALELFGFASLDDRETFRTLIGISKLGPRTALAILSHFTADDLLRVVASGDAEALVRVPGIGKKSAQRIFIELSYKLEGRAPAAGLAPSVPIPGGVAGDVVAGLTNLGYPEPEARQVAAEVLEAEPDLDVAAALRQALKRLASAKK.

The domain I stretch occupies residues 1-65; sequence MIGYLEGRVV…EDALELFGFA (65 aa). Residues 66 to 144 are domain II; that stretch reads SLDDRETFRT…GRAPAAGLAP (79 aa). Residues 145 to 155 are flexible linker; sequence SVPIPGGVAGD. The domain III stretch occupies residues 155 to 202; that stretch reads DVVAGLTNLGYPEPEARQVAAEVLEAEPDLDVAAALRQALKRLASAKK.

The protein belongs to the RuvA family. Homotetramer. Forms an RuvA(8)-RuvB(12)-Holliday junction (HJ) complex. HJ DNA is sandwiched between 2 RuvA tetramers; dsDNA enters through RuvA and exits via RuvB. An RuvB hexamer assembles on each DNA strand where it exits the tetramer. Each RuvB hexamer is contacted by two RuvA subunits (via domain III) on 2 adjacent RuvB subunits; this complex drives branch migration. In the full resolvosome a probable DNA-RuvA(4)-RuvB(12)-RuvC(2) complex forms which resolves the HJ.

It is found in the cytoplasm. The RuvA-RuvB-RuvC complex processes Holliday junction (HJ) DNA during genetic recombination and DNA repair, while the RuvA-RuvB complex plays an important role in the rescue of blocked DNA replication forks via replication fork reversal (RFR). RuvA specifically binds to HJ cruciform DNA, conferring on it an open structure. The RuvB hexamer acts as an ATP-dependent pump, pulling dsDNA into and through the RuvAB complex. HJ branch migration allows RuvC to scan DNA until it finds its consensus sequence, where it cleaves and resolves the cruciform DNA. The sequence is that of Holliday junction branch migration complex subunit RuvA from Solidesulfovibrio magneticus (strain ATCC 700980 / DSM 13731 / RS-1) (Desulfovibrio magneticus).